A 504-amino-acid polypeptide reads, in one-letter code: Signal recognition particle subunit SRP54 (504 aa).

An NG domain region spans residues 1-295; that stretch reads MVLADLGRKI…KTQPFISKLL (295 aa). GTP contacts are provided by residues 108–115, 190–194, and 248–251; these read GLQGSGKT, DTSGR, and TKLD. The M-domain stretch occupies residues 296–504; the sequence is GMGDIEGLID…MKGMMGFNNM (209 aa).

Belongs to the GTP-binding SRP family. SRP54 subfamily. As to quaternary structure, component of a signal recognition particle (SRP) complex that consists of a 7SL RNA molecule of 300 nucleotides and six protein subunits: SRP72, SRP68, SRP54, SRP19, SRP14 and SRP9. Interacts with RNPS1. Interacts with the SRP receptor subunit SRPRA.

The protein localises to the nucleus speckle. It is found in the cytoplasm. It localises to the endoplasmic reticulum. The catalysed reaction is GTP + H2O = GDP + phosphate + H(+). In terms of biological role, component of the signal recognition particle (SRP) complex, a ribonucleoprotein complex that mediates the cotranslational targeting of secretory and membrane proteins to the endoplasmic reticulum (ER). As part of the SRP complex, associates with the SRP receptor (SR) component SRPRA to target secretory proteins to the endoplasmic reticulum membrane. Binds to the signal sequence of presecretory proteins when they emerge from the ribosomes. Displays basal GTPase activity, and stimulates reciprocal GTPase activation of the SR subunit SRPRA. Forms a guanosine 5'-triphosphate (GTP)-dependent complex with the SR subunit SRPRA. SR compaction and GTPase mediated rearrangement of SR drive SRP-mediated cotranslational protein translocation into the ER. Requires the presence of SRP9/SRP14 and/or SRP19 to stably interact with RNA. Plays a role in proliferation and differentiation of granulocytic cells, neutrophils migration capacity and exocrine pancreas development. The chain is Signal recognition particle subunit SRP54 from Homo sapiens (Human).